The following is a 556-amino-acid chain: TNF receptor-associated factor 6-B (556 aa).

Residues 72 to 111 form an RING-type; degenerate zinc finger; it reads CPICLMALREAVQTPCGHRFCKACIVKSLRDAGHKCPVDN. 2 consecutive TRAF-type zinc fingers follow at residues 152 to 204 and 205 to 261; these read RHLG…EDMS and GHEL…NDLA. Residues 318–356 are a coiled coil; that stretch reads SHQDCSQETRNLRETIEQLEGRLVRQDHQIRELIAKMET. Residues 384–533 form the MATH domain; it reads NGVFIWKIKG…NDTLFVRCAV (150 aa).

This sequence belongs to the TNF receptor-associated factor family. A subfamily. In terms of assembly, homotrimer. Homooligomer.

Its subcellular location is the cytoplasm. The protein resides in the cell cortex. It localises to the nucleus. It is found in the lipid droplet. The enzyme catalyses S-ubiquitinyl-[E2 ubiquitin-conjugating enzyme]-L-cysteine + [acceptor protein]-L-lysine = [E2 ubiquitin-conjugating enzyme]-L-cysteine + N(6)-ubiquitinyl-[acceptor protein]-L-lysine.. It participates in protein modification; protein ubiquitination. In terms of biological role, E3 ubiquitin ligase that, together with UBE2N and UBE2V1, mediates the synthesis of 'Lys-63'-linked-polyubiquitin chains conjugated to proteins, such as IKBKG, IRAK1, AKT1 and AKT2. Also mediates ubiquitination of free/unanchored polyubiquitin chain that leads to MAP3K7 activation. The polypeptide is TNF receptor-associated factor 6-B (traf6-b) (Xenopus laevis (African clawed frog)).